Consider the following 261-residue polypeptide: DNA repair protein RecO (261 aa).

This sequence belongs to the RecO family.

Its function is as follows. Involved in DNA repair and RecF pathway recombination. This chain is DNA repair protein RecO, found in Chlorobium phaeobacteroides (strain DSM 266 / SMG 266 / 2430).